The following is a 108-amino-acid chain: Putative DNA-directed RNA polymerase subunit 1 inactive homolog (108 aa).

This is Putative DNA-directed RNA polymerase subunit 1 inactive homolog from Acanthamoeba polyphaga (Amoeba).